A 1297-amino-acid chain; its full sequence is Phosphoribosylformylglycinamidine synthase (1297 aa).

ATP-binding positions include Gly-307–Asp-318 and Ala-678. Mg(2+) is bound by residues Glu-718, Asn-722, and Asp-886. The 254-residue stretch at Met-1044–Gly-1297 folds into the Glutamine amidotransferase type-1 domain. The Nucleophile role is filled by Cys-1137. Catalysis depends on residues His-1262 and Glu-1264.

The protein in the N-terminal section; belongs to the FGAMS family. Monomer.

The protein resides in the cytoplasm. It carries out the reaction N(2)-formyl-N(1)-(5-phospho-beta-D-ribosyl)glycinamide + L-glutamine + ATP + H2O = 2-formamido-N(1)-(5-O-phospho-beta-D-ribosyl)acetamidine + L-glutamate + ADP + phosphate + H(+). Its pathway is purine metabolism; IMP biosynthesis via de novo pathway; 5-amino-1-(5-phospho-D-ribosyl)imidazole from N(2)-formyl-N(1)-(5-phospho-D-ribosyl)glycinamide: step 1/2. Its function is as follows. Phosphoribosylformylglycinamidine synthase involved in the purines biosynthetic pathway. Catalyzes the ATP-dependent conversion of formylglycinamide ribonucleotide (FGAR) and glutamine to yield formylglycinamidine ribonucleotide (FGAM) and glutamate. The protein is Phosphoribosylformylglycinamidine synthase of Vibrio cholerae serotype O1 (strain ATCC 39315 / El Tor Inaba N16961).